Reading from the N-terminus, the 386-residue chain is O-phospho-L-seryl-tRNA:Cys-tRNA synthase (386 aa).

Pyridoxal 5'-phosphate contacts are provided by residues 89-90 (AR), Asn-196, and 219-221 (SGH). An N6-(pyridoxal phosphate)lysine modification is found at Lys-222.

The protein belongs to the SepCysS family. Homodimer. Interacts with SepRS. The cofactor is pyridoxal 5'-phosphate.

It catalyses the reaction O-phospho-L-seryl-tRNA(Cys) + hydrogen sulfide + H(+) = L-cysteinyl-tRNA(Cys) + phosphate. Functionally, converts O-phospho-L-seryl-tRNA(Cys) (Sep-tRNA(Cys)) to L-cysteinyl-tRNA(Cys) (Cys-tRNA(Cys)). The sequence is that of O-phospho-L-seryl-tRNA:Cys-tRNA synthase from Methanosarcina mazei (strain ATCC BAA-159 / DSM 3647 / Goe1 / Go1 / JCM 11833 / OCM 88) (Methanosarcina frisia).